A 375-amino-acid polypeptide reads, in one-letter code: tRNA-specific 2-thiouridylase MnmA (375 aa).

Residues 8–15 (GLSGGVDS) and Met34 contribute to the ATP site. The tract at residues 104–106 (NPD) is interaction with target base in tRNA. Cys109 functions as the Nucleophile in the catalytic mechanism. Cys109 and Cys208 are oxidised to a cystine. Gly134 serves as a coordination point for ATP. An interaction with tRNA region spans residues 158 to 160 (KDQ). Cys208 functions as the Cysteine persulfide intermediate in the catalytic mechanism. Residues 321–322 (RY) are interaction with tRNA.

Belongs to the MnmA/TRMU family.

The protein localises to the cytoplasm. The enzyme catalyses S-sulfanyl-L-cysteinyl-[protein] + uridine(34) in tRNA + AH2 + ATP = 2-thiouridine(34) in tRNA + L-cysteinyl-[protein] + A + AMP + diphosphate + H(+). Its function is as follows. Catalyzes the 2-thiolation of uridine at the wobble position (U34) of tRNA, leading to the formation of s(2)U34. In Mycoplasma capricolum subsp. capricolum (strain California kid / ATCC 27343 / NCTC 10154), this protein is tRNA-specific 2-thiouridylase MnmA.